We begin with the raw amino-acid sequence, 881 residues long: Formin-like protein 10 (881 aa).

An N-terminal signal peptide occupies residues 1–24 (MAMKRVVFLLLLVAASALVKSSRG). A disordered region spans residues 194-223 (LTPSNSLNMEPPSPYYPSKSAHKHQGVAPP). The chain crosses the membrane as a helical span at residues 236 to 256 (VVLIAVLPTAALSFLAAFLCF). A compositionally biased stretch (polar residues) spans 333-346 (TLVTGGTQENNATS). 3 disordered regions span residues 333 to 427 (TLVT…EVNA), 683 to 703 (ENGR…ESLQ), and 837 to 881 (ASQK…DSND). Positions 351–390 (LMPPPPPPPPPPPPPPPPPPPRPPPPPPPIKKGAPPPAPP) are enriched in pro residues. The segment covering 400 to 424 (LSPTESSRSEESSASELASESSETE) has biased composition (low complexity). Positions 422-854 (ETEVNAPRAK…KSQANGNSNN (433 aa)) constitute an FH2 domain. The span at 692 to 701 (STSDDNSNES) shows a compositional bias: polar residues. The span at 846-865 (SQANGNSNNPSSQSNPQEQQ) shows a compositional bias: low complexity. Over residues 870–881 (LDHHFDSSDSND) the composition is skewed to basic and acidic residues.

The protein belongs to the formin-like family. Class-I subfamily.

It is found in the membrane. The chain is Formin-like protein 10 (FH10) from Oryza sativa subsp. japonica (Rice).